A 346-amino-acid chain; its full sequence is Cell division protein ZipA (346 aa).

At 1–6 (MEDLQL) the chain is on the periplasmic side. Residues 7-27 (VLFVLGAIAIVAVLVHGFWSI) traverse the membrane as a helical segment. Residues 28–346 (RRQQPKSLKD…DYLHRIRANA (319 aa)) lie on the Cytoplasmic side of the membrane. Residues 116-146 (EPSMAQPDFSLQSPTAKEQHRGPKASRQEPV) form a disordered region.

The protein belongs to the ZipA family. Interacts with FtsZ via their C-terminal domains.

Its subcellular location is the cell inner membrane. Functionally, essential cell division protein that stabilizes the FtsZ protofilaments by cross-linking them and that serves as a cytoplasmic membrane anchor for the Z ring. Also required for the recruitment to the septal ring of downstream cell division proteins. The protein is Cell division protein ZipA of Shewanella sp. (strain ANA-3).